A 201-amino-acid chain; its full sequence is Dephospho-CoA kinase (201 aa).

The 199-residue stretch at 3-201 folds into the DPCK domain; that stretch reads IIGLTGGMAA…ALLHRLREAS (199 aa). 11–16 contacts ATP; it reads AAGKST.

Belongs to the CoaE family.

It localises to the cytoplasm. The enzyme catalyses 3'-dephospho-CoA + ATP = ADP + CoA + H(+). It participates in cofactor biosynthesis; coenzyme A biosynthesis; CoA from (R)-pantothenate: step 5/5. Catalyzes the phosphorylation of the 3'-hydroxyl group of dephosphocoenzyme A to form coenzyme A. This chain is Dephospho-CoA kinase, found in Gluconobacter oxydans (strain 621H) (Gluconobacter suboxydans).